Here is a 163-residue protein sequence, read N- to C-terminus: MPSFDIVSEIDMQEVRNAVENATRDLANRWDFRNVPASFELNEKNESIKVVSESDFQVEQLLDILRAQLSKRGIEGAALEIPEEMARSGKTYSVDAKLKQGIESVQAKKLVKLIKDSKLKVQAQIQGEQVRVTGKARDDLQAVMALVRAADLGQPFQFNNFRD.

The protein belongs to the YajQ family.

Its function is as follows. Nucleotide-binding protein. The protein is Nucleotide-binding protein YPDSF_2805 of Yersinia pestis (strain Pestoides F).